The chain runs to 120 residues: Kidney androgen-regulated protein (120 aa).

The N-terminal stretch at 1 to 18 (MMICKVLVITVFCVLTVA) is a signal peptide.

Its subcellular location is the secreted. The sequence is that of Kidney androgen-regulated protein (Kap) from Rattus norvegicus (Rat).